The following is a 629-amino-acid chain: DNA mismatch repair protein MutL (629 aa).

This sequence belongs to the DNA mismatch repair MutL/HexB family.

Its function is as follows. This protein is involved in the repair of mismatches in DNA. It is required for dam-dependent methyl-directed DNA mismatch repair. May act as a 'molecular matchmaker', a protein that promotes the formation of a stable complex between two or more DNA-binding proteins in an ATP-dependent manner without itself being part of a final effector complex. This Haemophilus influenzae (strain 86-028NP) protein is DNA mismatch repair protein MutL.